The primary structure comprises 481 residues: Endonuclease Bax1 (481 aa).

The tract at residues 1–136 (MLPWELARFS…EKKIIKAPTI (136 aa)) is N-terminal domain (NTD). The tract at residues 158-250 (YKLTVYVSSN…LKLANFKELK (93 aa)) is central domain (CRD). Residues 260–364 (DSSVEEKFYK…YKRKIDISLV (105 aa)) are nuclease domain (NUS). A divalent metal cation is bound by residues E265, D297, and E310. The C-terminal domain (CTD) stretch occupies residues 414 to 481 (PGYIFLKNYY…AIVIKDKKVN (68 aa)).

Belongs to the Bax1 family. As to quaternary structure, homodimer in solution, forms a heterodimer with XPB2. It depends on a divalent metal cation as a cofactor.

A dual DNA endonuclease probably involved in nucleotide excision repair (NER). The N-terminal nuclease domain (NTD) of the XPB2-Bax1 complex cleaves on one side of a DNA bubble (which presumably mimics DNA damage), while the NUS nuclease domain cleaves the other side, respectively called 5' and 3' nuclease activities. Interaction with XPB blocks the NTD nuclease activity. Binds to and stimulates the ATPase activity (and probably also helicase activity) of XPB2. Increases affinity of XPB2 for forked DNA. Does not stimulate the DNA-dependent activity of XPB1. In an XPB2-Bax1-bubble DNA crystal (12 bp of dsDNA, a 6 base bubble and 6 bp of dsDNA) the short 6 bp arm is unwound. The 2 helicase and the ThM domains of XPB2 with the NTD and CRD domains of Bax1 encircle the DNA, forming a tunnel where the 12 bp dsDNA and the ds-ssDNA junction are located. The ThM domain is wedged between the ssDNA tails, with the 5' ssDNA contacting Bax1 and the 3' ssDNA in a channel in XPB2. The nuclease domain (NUS) of Bax1 does not contact DNA in the bubble DNA complex. The sequence is that of Endonuclease Bax1 from Sulfurisphaera tokodaii (strain DSM 16993 / JCM 10545 / NBRC 100140 / 7) (Sulfolobus tokodaii).